The following is a 437-amino-acid chain: Glutamate-1-semialdehyde 2,1-aminomutase (437 aa).

N6-(pyridoxal phosphate)lysine is present on K273.

Belongs to the class-III pyridoxal-phosphate-dependent aminotransferase family. HemL subfamily. In terms of assembly, homodimer. The cofactor is pyridoxal 5'-phosphate.

The protein resides in the cytoplasm. It carries out the reaction (S)-4-amino-5-oxopentanoate = 5-aminolevulinate. The protein operates within porphyrin-containing compound metabolism; protoporphyrin-IX biosynthesis; 5-aminolevulinate from L-glutamyl-tRNA(Glu): step 2/2. The chain is Glutamate-1-semialdehyde 2,1-aminomutase from Chlamydia abortus (strain DSM 27085 / S26/3) (Chlamydophila abortus).